The following is a 211-amino-acid chain: Uridine kinase (211 aa).

Residue 13–20 (GGTASGKT) participates in ATP binding.

It belongs to the uridine kinase family.

It is found in the cytoplasm. It carries out the reaction uridine + ATP = UMP + ADP + H(+). The enzyme catalyses cytidine + ATP = CMP + ADP + H(+). It functions in the pathway pyrimidine metabolism; CTP biosynthesis via salvage pathway; CTP from cytidine: step 1/3. Its pathway is pyrimidine metabolism; UMP biosynthesis via salvage pathway; UMP from uridine: step 1/1. The polypeptide is Uridine kinase (Thermus thermophilus (strain ATCC BAA-163 / DSM 7039 / HB27)).